Consider the following 115-residue polypeptide: Phosphoribosyl-AMP cyclohydrolase (115 aa).

Asp80 lines the Mg(2+) pocket. Residue Cys81 participates in Zn(2+) binding. Residues Asp82 and Asp84 each contribute to the Mg(2+) site. Zn(2+) is bound by residues Cys97 and Cys104.

It belongs to the PRA-CH family. Homodimer. Mg(2+) serves as cofactor. Requires Zn(2+) as cofactor.

It is found in the cytoplasm. It catalyses the reaction 1-(5-phospho-beta-D-ribosyl)-5'-AMP + H2O = 1-(5-phospho-beta-D-ribosyl)-5-[(5-phospho-beta-D-ribosylamino)methylideneamino]imidazole-4-carboxamide. The protein operates within amino-acid biosynthesis; L-histidine biosynthesis; L-histidine from 5-phospho-alpha-D-ribose 1-diphosphate: step 3/9. Catalyzes the hydrolysis of the adenine ring of phosphoribosyl-AMP. The sequence is that of Phosphoribosyl-AMP cyclohydrolase from Nocardia farcinica (strain IFM 10152).